A 349-amino-acid polypeptide reads, in one-letter code: tRNA pseudouridine synthase D (349 aa).

Phe27 provides a ligand contact to substrate. Residue Asp80 is the Nucleophile of the active site. A substrate-binding site is contributed by Asn129. In terms of domain architecture, TRUD spans 155–303 (GVPNYFGAQR…VEAARRAMLL (149 aa)). A substrate-binding site is contributed by Phe329.

It belongs to the pseudouridine synthase TruD family.

The catalysed reaction is uridine(13) in tRNA = pseudouridine(13) in tRNA. Responsible for synthesis of pseudouridine from uracil-13 in transfer RNAs. This Enterobacter sp. (strain 638) protein is tRNA pseudouridine synthase D.